The primary structure comprises 371 residues: Histidinol-phosphate aminotransferase (371 aa).

Lys-227 is subject to N6-(pyridoxal phosphate)lysine.

This sequence belongs to the class-II pyridoxal-phosphate-dependent aminotransferase family. Histidinol-phosphate aminotransferase subfamily. As to quaternary structure, homodimer. The cofactor is pyridoxal 5'-phosphate.

It catalyses the reaction L-histidinol phosphate + 2-oxoglutarate = 3-(imidazol-4-yl)-2-oxopropyl phosphate + L-glutamate. The protein operates within amino-acid biosynthesis; L-histidine biosynthesis; L-histidine from 5-phospho-alpha-D-ribose 1-diphosphate: step 7/9. This Sphingopyxis alaskensis (strain DSM 13593 / LMG 18877 / RB2256) (Sphingomonas alaskensis) protein is Histidinol-phosphate aminotransferase.